The following is an 822-amino-acid chain: Probable phosphoketolase (822 aa).

This sequence belongs to the XFP family. Requires thiamine diphosphate as cofactor.

In Nocardia farcinica (strain IFM 10152), this protein is Probable phosphoketolase.